We begin with the raw amino-acid sequence, 290 residues long: 30 kDa spicule matrix protein alpha (290 aa).

The signal sequence occupies residues M1 to A20. Residues A92–P162 form the C-type lectin domain. A glycan (N-linked (GlcNAc...) asparagine) is linked at N102.

Accumulates exclusively in mineralized tissues.

Matrix protein of the sea urchin embryo spicule. The function of the matrix proteins is to direct crystal growth in certain orientations and inhibit growth in others. The polypeptide is 30 kDa spicule matrix protein alpha (SM30A) (Strongylocentrotus purpuratus (Purple sea urchin)).